The sequence spans 152 residues: Lipoprotein signal peptidase (152 aa).

Helical transmembrane passes span 55–75 and 85–105; these read NKMW…VFYM and LGIS…DRVF. Catalysis depends on residues Asp-111 and Asp-129. A helical membrane pass occupies residues 124 to 144; sequence VFNIADSALCIGVVLIIIQTL.

It belongs to the peptidase A8 family.

It localises to the cell membrane. It carries out the reaction Release of signal peptides from bacterial membrane prolipoproteins. Hydrolyzes -Xaa-Yaa-Zaa-|-(S,diacylglyceryl)Cys-, in which Xaa is hydrophobic (preferably Leu), and Yaa (Ala or Ser) and Zaa (Gly or Ala) have small, neutral side chains.. Its pathway is protein modification; lipoprotein biosynthesis (signal peptide cleavage). In terms of biological role, this protein specifically catalyzes the removal of signal peptides from prolipoproteins. The polypeptide is Lipoprotein signal peptidase (Bacillus cereus (strain B4264)).